A 454-amino-acid polypeptide reads, in one-letter code: Protein disulfide-isomerase TMX3 (454 aa).

Residues 1 to 24 form the signal peptide; that stretch reads MAAWKSWAALRLCATVVLLDMVVC. The 104-residue stretch at 25–128 folds into the Thioredoxin domain; the sequence is KGFVEDLDES…KDDIIEFAHR (104 aa). Over 25–375 the chain is Lumenal; it reads KGFVEDLDES…TIVSIFKSSP (351 aa). Catalysis depends on nucleophile residues cysteine 53 and cysteine 56. A disulfide bond links cysteine 53 and cysteine 56. 2 N-linked (GlcNAc...) asparagine glycosylation sites follow: asparagine 258 and asparagine 313. Residues 376–396 traverse the membrane as a helical segment; that stretch reads LMGCFLFGLPLGVISIMCYGI. Topologically, residues 397 to 454 are cytoplasmic; the sequence is YTADTDGGYIEERYEVSKSENENQEQIEESKEQQEPSSGGSVVPTVQEPKDVLEKKKD. The disordered stretch occupies residues 412-454; that stretch reads VSKSENENQEQIEESKEQQEPSSGGSVVPTVQEPKDVLEKKKD. The span at 444 to 454 shows a compositional bias: basic and acidic residues; the sequence is EPKDVLEKKKD. A Di-lysine motif motif is present at residues 451-454; that stretch reads KKKD.

Belongs to the protein disulfide isomerase family.

It is found in the endoplasmic reticulum membrane. The catalysed reaction is Catalyzes the rearrangement of -S-S- bonds in proteins.. Probable disulfide isomerase, which participates in the folding of proteins containing disulfide bonds. May act as a dithiol oxidase. Acts as a regulator of endoplasmic reticulum-mitochondria contact sites via its ability to regulate redox signals. The polypeptide is Protein disulfide-isomerase TMX3 (TMX3) (Pongo abelii (Sumatran orangutan)).